The following is a 156-amino-acid chain: Small ribosomal subunit protein uS7 (156 aa).

This sequence belongs to the universal ribosomal protein uS7 family. As to quaternary structure, part of the 30S ribosomal subunit. Contacts proteins S9 and S11.

Its function is as follows. One of the primary rRNA binding proteins, it binds directly to 16S rRNA where it nucleates assembly of the head domain of the 30S subunit. Is located at the subunit interface close to the decoding center, probably blocks exit of the E-site tRNA. The sequence is that of Small ribosomal subunit protein uS7 from Salinispora arenicola (strain CNS-205).